The sequence spans 320 residues: MARPKIALIGAGQIGGTLAHLVALKELGDVVLFDIADGTPQGKALDIAESGPVERFDASLKGTTDYADIAGADVCIVTAGVPRKPGMSRDDLLGINLKVMKSVGEGIAANAPDAFVICITNPLDAMVWALQQFSGLPKEKVVGMAGVLDSARFRHFLAEEFNVSMKDVTAFVLGGHGDTMVPLTRYSTVAGIPLPDLVEMGWTSQEKLDAIVQRTRDGGAEIVGLLKTGSAFYAPAASAVEMAEAYLKDQKRLLPCAAYCDGEFGLNDMYVGVPTIIGAGGIEKVVDIKLGKDEQAMFDNSVNAVKGLMEACKGIDDSLV.

NAD(+) contacts are provided by residues 10–15 (GAGQIG) and Asp34. Positions 83 and 89 each coordinate substrate. Residues Asn96 and 119–121 (ITN) each bind NAD(+). The substrate site is built by Asn121 and Arg152. Catalysis depends on His176, which acts as the Proton acceptor.

It belongs to the LDH/MDH superfamily. MDH type 3 family.

The catalysed reaction is (S)-malate + NAD(+) = oxaloacetate + NADH + H(+). In terms of biological role, catalyzes the reversible oxidation of malate to oxaloacetate. The chain is Malate dehydrogenase from Dinoroseobacter shibae (strain DSM 16493 / NCIMB 14021 / DFL 12).